The primary structure comprises 358 residues: tRNA-specific 2-thiouridylase MnmA (358 aa).

Residues 10 to 17 (AMSGGVDS) and methionine 36 each bind ATP. The active-site Nucleophile is cysteine 105. Cysteine 105 and cysteine 202 are joined by a disulfide. Glycine 129 contributes to the ATP binding site. Residues 152–154 (KDQ) form an interaction with tRNA region. Cysteine 202 functions as the Cysteine persulfide intermediate in the catalytic mechanism. The interaction with tRNA stretch occupies residues 308–309 (RY).

It belongs to the MnmA/TRMU family.

It is found in the cytoplasm. The enzyme catalyses S-sulfanyl-L-cysteinyl-[protein] + uridine(34) in tRNA + AH2 + ATP = 2-thiouridine(34) in tRNA + L-cysteinyl-[protein] + A + AMP + diphosphate + H(+). Catalyzes the 2-thiolation of uridine at the wobble position (U34) of tRNA, leading to the formation of s(2)U34. The chain is tRNA-specific 2-thiouridylase MnmA from Magnetococcus marinus (strain ATCC BAA-1437 / JCM 17883 / MC-1).